The chain runs to 827 residues: Multiphosphoryl transfer protein (827 aa).

The region spanning I2 to A142 is the PTS EIIA type-2 domain. The Tele-phosphohistidine intermediate; for EIIA activity role is filled by H62. Phosphohistidine; by HPr is present on H62. Residues A157–E245 enclose the HPr domain. H171 serves as the catalytic Pros-phosphohistidine intermediate; for HPr activity. H171 is modified (phosphohistidine; by EI). A PTS EI region spans residues E270–K827. Residue H457 is the Tele-phosphohistidine intermediate; for PTS EI activity of the active site. H457 carries the phosphohistidine; by autocatalysis modification. 2 residues coordinate phosphoenolpyruvate: R564 and R600. Residues E693 and D717 each contribute to the Mg(2+) site. Residues N716–D717 and R727 each bind phosphoenolpyruvate. C764 serves as the catalytic Proton donor.

The protein belongs to the PEP-utilizing enzyme family. Mg(2+) is required as a cofactor.

The protein localises to the cytoplasm. It catalyses the reaction L-histidyl-[protein] + phosphoenolpyruvate = N(pros)-phospho-L-histidyl-[protein] + pyruvate. In terms of biological role, the phosphoenolpyruvate-dependent sugar phosphotransferase system (sugar PTS), a major carbohydrate active transport system, catalyzes the phosphorylation of incoming sugar substrates concomitantly with their translocation across the cell membrane. The enzyme II FruAB PTS system is involved in fructose transport. This Rhodobacter capsulatus (Rhodopseudomonas capsulata) protein is Multiphosphoryl transfer protein.